Consider the following 309-residue polypeptide: Ribosomal RNA small subunit methyltransferase H (309 aa).

S-adenosyl-L-methionine is bound by residues 33–35 (GGH), aspartate 53, phenylalanine 79, aspartate 100, and glutamine 107.

The protein belongs to the methyltransferase superfamily. RsmH family.

It localises to the cytoplasm. It catalyses the reaction cytidine(1402) in 16S rRNA + S-adenosyl-L-methionine = N(4)-methylcytidine(1402) in 16S rRNA + S-adenosyl-L-homocysteine + H(+). Functionally, specifically methylates the N4 position of cytidine in position 1402 (C1402) of 16S rRNA. In Clostridium botulinum (strain Loch Maree / Type A3), this protein is Ribosomal RNA small subunit methyltransferase H.